The chain runs to 204 residues: MKLLHLDSSILGDYSASRQLTASIVAKLQAADPALQYTYRDLAANPIGHLSGAHLAAAQNPPATRTPELANDLALGVQVLQEFLDADTVVIGVALYNFTISTQLKAWIDRVLVAGKTFRYTAEGALEGLAGNKRVILAVARGGRYGEGSPTAALEHAETYMRAALGFVGLHQPEVVVAEGLALGPEARAAGMAAAQAQIDALPV.

FMN is bound by residues serine 9 and 15–17 (SAS).

This sequence belongs to the azoreductase type 1 family. As to quaternary structure, homodimer. The cofactor is FMN.

The catalysed reaction is 2 a quinone + NADH + H(+) = 2 a 1,4-benzosemiquinone + NAD(+). It carries out the reaction N,N-dimethyl-1,4-phenylenediamine + anthranilate + 2 NAD(+) = 2-(4-dimethylaminophenyl)diazenylbenzoate + 2 NADH + 2 H(+). Its function is as follows. Quinone reductase that provides resistance to thiol-specific stress caused by electrophilic quinones. Functionally, also exhibits azoreductase activity. Catalyzes the reductive cleavage of the azo bond in aromatic azo compounds to the corresponding amines. The protein is FMN-dependent NADH:quinone oxidoreductase of Xanthomonas campestris pv. campestris (strain ATCC 33913 / DSM 3586 / NCPPB 528 / LMG 568 / P 25).